A 483-amino-acid polypeptide reads, in one-letter code: Isocitrate dehydrogenase [NADP] (483 aa).

Thr74 is a binding site for NADP(+). Residues Ser83, Asn85, Arg89, Arg99, and Arg121 each contribute to the D-threo-isocitrate site. Residue Asp232 coordinates Mg(2+). Residues His264–Ile270 and Asn277 contribute to the NADP(+) site.

It belongs to the isocitrate and isopropylmalate dehydrogenases family. In terms of assembly, homodimer. Requires Mg(2+) as cofactor. The cofactor is Mn(2+).

It catalyses the reaction D-threo-isocitrate + NADP(+) = 2-oxoglutarate + CO2 + NADPH. Its function is as follows. Catalyzes the oxidative decarboxylation of isocitrate to 2-oxoglutarate and carbon dioxide with the concomitant reduction of NADP(+). The polypeptide is Isocitrate dehydrogenase [NADP] (icd) (Rickettsia prowazekii (strain Madrid E)).